Reading from the N-terminus, the 643-residue chain is DNA gyrase subunit B (643 aa).

Positions 428 to 542 (SEIFLVEGDS…AGYVYIAQPP (115 aa)) constitute a Toprim domain. Mg(2+)-binding residues include Glu434, Asp507, and Asp509.

Belongs to the type II topoisomerase GyrB family. In terms of assembly, heterotetramer, composed of two GyrA and two GyrB chains. In the heterotetramer, GyrA contains the active site tyrosine that forms a transient covalent intermediate with DNA, while GyrB binds cofactors and catalyzes ATP hydrolysis. It depends on Mg(2+) as a cofactor. Mn(2+) is required as a cofactor. Ca(2+) serves as cofactor.

Its subcellular location is the cytoplasm. It carries out the reaction ATP-dependent breakage, passage and rejoining of double-stranded DNA.. A type II topoisomerase that negatively supercoils closed circular double-stranded (ds) DNA in an ATP-dependent manner to modulate DNA topology and maintain chromosomes in an underwound state. Negative supercoiling favors strand separation, and DNA replication, transcription, recombination and repair, all of which involve strand separation. Also able to catalyze the interconversion of other topological isomers of dsDNA rings, including catenanes and knotted rings. Type II topoisomerases break and join 2 DNA strands simultaneously in an ATP-dependent manner. The chain is DNA gyrase subunit B from Staphylococcus epidermidis (strain ATCC 35984 / DSM 28319 / BCRC 17069 / CCUG 31568 / BM 3577 / RP62A).